Reading from the N-terminus, the 93-residue chain is uncharacterized protein (93 aa).

The TRAM domain occupies 24 to 85 (QLQVGDTLKL…IQTQVGRLFF (62 aa)).

The protein belongs to the ycf81 family.

This is an uncharacterized protein from Thermus thermophilus.